A 284-amino-acid polypeptide reads, in one-letter code: Ribosomal RNA small subunit methyltransferase A (284 aa).

Asn-12, Leu-14, Gly-38, Glu-59, Asp-81, and Asn-106 together coordinate S-adenosyl-L-methionine.

This sequence belongs to the class I-like SAM-binding methyltransferase superfamily. rRNA adenine N(6)-methyltransferase family. RsmA subfamily.

Its subcellular location is the cytoplasm. It carries out the reaction adenosine(1518)/adenosine(1519) in 16S rRNA + 4 S-adenosyl-L-methionine = N(6)-dimethyladenosine(1518)/N(6)-dimethyladenosine(1519) in 16S rRNA + 4 S-adenosyl-L-homocysteine + 4 H(+). In terms of biological role, specifically dimethylates two adjacent adenosines (A1518 and A1519) in the loop of a conserved hairpin near the 3'-end of 16S rRNA in the 30S particle. May play a critical role in biogenesis of 30S subunits. In Phytoplasma australiense, this protein is Ribosomal RNA small subunit methyltransferase A.